The chain runs to 203 residues: MHQIYSCSDENIEVFTTVIPSKVTSPARRRVKSSQHLLTKNVVIESDLYAPRPVELLPHRTDRRDGEGRWSGRFQNPRLQGPHPAKTPARPVGTSEPKSANLCGNRTYGKALMPPVARISVKAPTVLEAAAPGSENVAVLTRGSRHLKKMTEEFPTLPQGAEASLPLTGSAPCGMPSILRKMWTRHKKKSEYVGATNSAFEAD.

Basic and acidic residues predominate over residues 59–70 (HRTDRRDGEGRW). The tract at residues 59-101 (HRTDRRDGEGRWSGRFQNPRLQGPHPAKTPARPVGTSEPKSAN) is disordered.

Belongs to the vexin family.

The protein resides in the cell membrane. Its subcellular location is the nucleus. Its function is as follows. Required for neurogenesis in the neural plate and retina. Strongly cooperates with neural bHLH factors to promote neurogenesis. This Bos taurus (Bovine) protein is Vexin.